The following is a 162-amino-acid chain: Xanthine-guanine phosphoribosyltransferase (162 aa).

5-phospho-alpha-D-ribose 1-diphosphate is bound by residues 43 to 44 (RG) and 94 to 102 (DDLVDTGTT). Aspartate 95 serves as a coordination point for Mg(2+). Guanine-binding residues include aspartate 98 and isoleucine 141. 2 residues coordinate xanthine: aspartate 98 and isoleucine 141. GMP contacts are provided by residues 98-102 (DTGTT) and 140-141 (WI).

It belongs to the purine/pyrimidine phosphoribosyltransferase family. XGPT subfamily. Homotetramer. It depends on Mg(2+) as a cofactor.

It is found in the cell inner membrane. It carries out the reaction GMP + diphosphate = guanine + 5-phospho-alpha-D-ribose 1-diphosphate. It catalyses the reaction XMP + diphosphate = xanthine + 5-phospho-alpha-D-ribose 1-diphosphate. The enzyme catalyses IMP + diphosphate = hypoxanthine + 5-phospho-alpha-D-ribose 1-diphosphate. It functions in the pathway purine metabolism; GMP biosynthesis via salvage pathway; GMP from guanine: step 1/1. The protein operates within purine metabolism; XMP biosynthesis via salvage pathway; XMP from xanthine: step 1/1. Functionally, purine salvage pathway enzyme that catalyzes the transfer of the ribosyl-5-phosphate group from 5-phospho-alpha-D-ribose 1-diphosphate (PRPP) to the N9 position of the 6-oxopurines guanine and xanthine to form the corresponding ribonucleotides GMP (guanosine 5'-monophosphate) and XMP (xanthosine 5'-monophosphate), with the release of PPi. To a lesser extent, also acts on hypoxanthine. This chain is Xanthine-guanine phosphoribosyltransferase, found in Oleidesulfovibrio alaskensis (strain ATCC BAA-1058 / DSM 17464 / G20) (Desulfovibrio alaskensis).